We begin with the raw amino-acid sequence, 244 residues long: Putative outer membrane protein RC0105 (244 aa).

The N-terminal stretch at 1–23 (MLRIVKKLGIILFVSTISINSFA) is a signal peptide.

Belongs to the OmpW/AlkL family.

The protein resides in the cell outer membrane. This is Putative outer membrane protein RC0105 from Rickettsia conorii (strain ATCC VR-613 / Malish 7).